A 260-amino-acid chain; its full sequence is MHRYALKVEYNGAPFVGWQRQKEHPTIQGAIERALGKIAPGPHTIAAAGRTDAGVHAIAQVAHCDLERDWDPFRLSEALNYHLKPAPIAITACTAVDAEWHARFSARQRQYLFRILCRRAPATHQKGLVWQVKQKLDVTAMREAAALLIGQHDFTTFRSTICQAESPVKTLDRLDVNEVDTPYGREIHFDVRARSFLHNQVRSFVGTLERVGAGSSTPQDVARALALRDRAACGPVCPPHGLYLAHVVYDRPPFEAERSI.

Asp-52 functions as the Nucleophile in the catalytic mechanism. Tyr-111 is a binding site for substrate.

It belongs to the tRNA pseudouridine synthase TruA family. In terms of assembly, homodimer.

It carries out the reaction uridine(38/39/40) in tRNA = pseudouridine(38/39/40) in tRNA. In terms of biological role, formation of pseudouridine at positions 38, 39 and 40 in the anticodon stem and loop of transfer RNAs. In Roseobacter denitrificans (strain ATCC 33942 / OCh 114) (Erythrobacter sp. (strain OCh 114)), this protein is tRNA pseudouridine synthase A.